Reading from the N-terminus, the 148-residue chain is Ponticulin-like protein D (148 aa).

Positions 1–20 (MLLNKSLLLLVAFVFAIVSA) are cleaved as a signal peptide. N-linked (GlcNAc...) asparagine glycosylation is present at Asn67. Asp125 carries GPI-like-anchor amidated aspartate lipidation. Positions 126 to 148 (SSAAATMIASFSAILIALLFALL) are cleaved as a propeptide — removed in mature form.

The protein belongs to the ponticulin family. In terms of processing, the GPI-like-anchor contains a phosphoceramide group, rather than a phosphatidyl group.

The protein localises to the cell membrane. The protein is Ponticulin-like protein D (ponD) of Dictyostelium discoideum (Social amoeba).